A 45-amino-acid chain; its full sequence is Mu-conotoxin-like Cal 12.1.2g (45 aa).

Disulfide bonds link Cys3-Cys16, Cys11-Cys28, Cys18-Cys33, and Cys27-Cys39. Position 23 is a 4-hydroxyproline (Pro23). 2 positions are modified to 6'-bromotryptophan: Trp37 and Trp38. Residue Pro40 is modified to 4-hydroxyproline.

Expressed by the venom duct.

The protein resides in the secreted. In terms of biological role, mu-conotoxins block voltage-gated sodium channels. This toxin reversibly blocks voltage-gated sodium channel in cephalopods, with no alteration in the voltage dependence of sodium conductance or on the kinetics of inactivation. The protein is Mu-conotoxin-like Cal 12.1.2g of Californiconus californicus (California cone).